A 269-amino-acid chain; its full sequence is Tropinone reductase homolog At2g29320 (269 aa).

NADP(+) is bound at residue 19-43 (LVTGAASGIGYAIVEELAGFGAKIH). Ser152 contributes to the substrate binding site. The active-site Proton acceptor is Tyr166.

Belongs to the short-chain dehydrogenases/reductases (SDR) family. SDR65C subfamily.

This chain is Tropinone reductase homolog At2g29320, found in Arabidopsis thaliana (Mouse-ear cress).